A 222-amino-acid chain; its full sequence is UPF0758 protein YicR (222 aa).

Residues 100 to 222 (PLLSPEMTRE…YVSFAERGWI (123 aa)) enclose the MPN domain. Residues His171, His173, and Asp184 each contribute to the Zn(2+) site. The JAMM motif signature appears at 171-184 (HNHPSGCAEPSKAD).

This sequence belongs to the UPF0758 family. YicR subfamily.

The sequence is that of UPF0758 protein YicR from Escherichia coli O9:H4 (strain HS).